The chain runs to 817 residues: Rho GTPase-activating protein gacII (817 aa).

One can recognise a Rho-GAP domain in the interval 20–204 (TTIVKIGTPK…TLIEEFQYIS (185 aa)). The SH3 domain occupies 238–298 (EDYLIAKANT…SQTYVDIIDI (61 aa)). Residues 318–339 (ASTILHTPPTSSSSSSSSSSSS) show a composition bias toward low complexity. Disordered stretches follow at residues 318–638 (ASTI…NIPV), 691–771 (LGGQ…QQQQ), and 783–817 (LPPQNTNLSGKNLQRSSTSMLLNKLPPPPFSFNKN). The span at 340–358 (ILLTDNQPKLCSSTPRINN) shows a compositional bias: polar residues. Over residues 359–391 (SPSSFSPSLSSTTPQLLVQQSPRQSPRQIPSIS) the composition is skewed to low complexity. The segment covering 396 to 438 (PNNTNQPSFGHGTLQRTSTGYFSSKPLSISQPINMSKPTNMSP) has biased composition (polar residues). Pro residues predominate over residues 461–471 (PPLPTKPPPLT). Over residues 472 to 498 (IPSSSSLPTTPIKQQPQQPIQQPLTPQ) the composition is skewed to low complexity. Positions 509–532 (LSSSVNTANTGNCANILSPNSDRY) are enriched in polar residues. 3 stretches are compositionally biased toward low complexity: residues 534 to 568 (SSRSQSSVHLSGSSSSSSSSSSSSSSSSSSSSSTS), 577 to 587 (KSKSSKNSPSK), and 607 to 624 (ITTTTTTTTTTTTTTIAT). Positions 625–635 (TPPPPSKPLPN) are enriched in pro residues. A compositionally biased stretch (polar residues) spans 705–722 (KSQSSYLDNNNLPSRNTN). The segment covering 725 to 734 (NLPPRPPPLN) has biased composition (pro residues). 2 stretches are compositionally biased toward low complexity: residues 735 to 744 (IPQQQQQYKP) and 752 to 771 (QSPQSSLNQSLQIPLQQQQQ). A compositionally biased stretch (polar residues) spans 785–803 (PQNTNLSGKNLQRSSTSML). A compositionally biased stretch (pro residues) spans 807–817 (LPPPPFSFNKN).

Its subcellular location is the cytoplasm. Its function is as follows. Rho GTPase-activating protein involved in the signal transduction pathway. The chain is Rho GTPase-activating protein gacII (gacII) from Dictyostelium discoideum (Social amoeba).